A 205-amino-acid chain; its full sequence is Urease accessory protein UreG (205 aa).

Residue 10 to 17 participates in GTP binding; it reads GPVGAGKT.

The protein belongs to the SIMIBI class G3E GTPase family. UreG subfamily. Homodimer. UreD, UreF and UreG form a complex that acts as a GTP-hydrolysis-dependent molecular chaperone, activating the urease apoprotein by helping to assemble the nickel containing metallocenter of UreC. The UreE protein probably delivers the nickel.

It is found in the cytoplasm. Functionally, facilitates the functional incorporation of the urease nickel metallocenter. This process requires GTP hydrolysis, probably effectuated by UreG. This Corynebacterium glutamicum (strain R) protein is Urease accessory protein UreG.